A 98-amino-acid polypeptide reads, in one-letter code: NADH-ubiquinone oxidoreductase chain 4L (98 aa).

3 helical membrane passes run 1 to 21 (MSLTYMNMFMAFTISLLGLLM), 29 to 49 (SLLCLEGMMLSLFVMMTITIL), and 61 to 81 (IILLVFAACEAALGLSLLVMV).

Belongs to the complex I subunit 4L family. As to quaternary structure, core subunit of respiratory chain NADH dehydrogenase (Complex I) which is composed of 45 different subunits.

The protein resides in the mitochondrion inner membrane. The catalysed reaction is a ubiquinone + NADH + 5 H(+)(in) = a ubiquinol + NAD(+) + 4 H(+)(out). Functionally, core subunit of the mitochondrial membrane respiratory chain NADH dehydrogenase (Complex I) which catalyzes electron transfer from NADH through the respiratory chain, using ubiquinone as an electron acceptor. Part of the enzyme membrane arm which is embedded in the lipid bilayer and involved in proton translocation. The chain is NADH-ubiquinone oxidoreductase chain 4L (MT-ND4L) from Artibeus jamaicensis (Jamaican fruit-eating bat).